The sequence spans 162 residues: Sorting nexin-3 (162 aa).

The tract at residues 1–23 (MPREFKSFGSTEKSLLSKGHGEP) is disordered. In terms of domain architecture, PX spans 38 to 161 (IEVHNPKTHI…VRFIEAEKFV (124 aa)). Residues R81, S83, K112, and R127 each contribute to the a 1,2-diacyl-sn-glycero-3-phospho-(1D-myo-inositol-3-phosphate) site.

Belongs to the sorting nexin family. In terms of assembly, monomer. Interacts with RBD2, YIF1, YIP1 and YIP5.

It localises to the cytoplasm. The protein localises to the golgi apparatus membrane. Its subcellular location is the prevacuolar compartment membrane. Its function is as follows. Required for retention of late Golgi membrane proteins. Component of the retrieval machinery that functions by direct interaction with the cytosolic tails of certain TGN membrane proteins during the sorting/budding process at the prevacuolar compartment. Binds phosphatidylinositol 3-phosphate (PtdIns(P3)). The chain is Sorting nexin-3 (SNX3) from Saccharomyces cerevisiae (strain ATCC 204508 / S288c) (Baker's yeast).